We begin with the raw amino-acid sequence, 94 residues long: MPKLAVVLLVLLILPLSYFDAGGQAVQGDWRGNRLARDLQRGGRDDESECIINTRDSPWGRCCRTRMCGSMCCPRNGCTCVYHWRRGHGCSCPG.

The signal sequence occupies residues 1–25 (MPKLAVVLLVLLILPLSYFDAGGQA). A propeptide spanning residues 26 to 44 (VQGDWRGNRLARDLQRGGR) is cleaved from the precursor. Glu47 and Glu49 each carry 4-carboxyglutamate. 4 disulfides stabilise this stretch: Cys63–Cys72, Cys68–Cys80, Cys73–Cys90, and Cys78–Cys92.

Belongs to the conotoxin D superfamily. Hetero-, homo- or pseudo-homodimer (identical sequence, different post-translational modifications). Expressed by the venom duct.

The protein localises to the secreted. Its function is as follows. Alpha-conotoxins act on postsynaptic membranes, they bind to the nicotinic acetylcholine receptors (nAChR) and thus inhibit them. Through its two C-terminal domains, this homodimeric protein would bind to two nAChR allosteric sites, located outside the nAChR C-loop of the principal binding face and at the adjacent binding interface in a clockwise direction. This toxin specifically blocks mammalian neuronal nAChR of the alpha-7/CHRNA7, alpha-3-beta-2/CHRNA3-CHRNB2 and alpha-4-beta-2/CHRNA4-CHRNB2 subtypes. In Conus planorbis (Planorbis cone), this protein is Alpha-conotoxin-like Vt20.1.